Here is a 251-residue protein sequence, read N- to C-terminus: Large ribosomal subunit protein uL16m (251 aa).

A mitochondrion-targeting transit peptide spans 1–29 (MWRLLTRVPAPLLRMHFSDSWAALPTSAG).

This sequence belongs to the universal ribosomal protein uL16 family. In terms of assembly, component of the mitochondrial ribosome large subunit (39S) which comprises a 16S rRNA and about 50 distinct proteins.

It localises to the mitochondrion. The protein is Large ribosomal subunit protein uL16m (Mrpl16) of Mus musculus (Mouse).